The chain runs to 233 residues: Ubiquitin carboxyl-terminal hydrolase isozyme L4 (233 aa).

The UCH catalytic domain occupies 5 to 232 (RWLPLEANPE…LRFNAIALSA (228 aa)). The interval 8–13 (PLEANP) is interaction with ubiquitin. The active-site Nucleophile is the cysteine 95. The residue at position 133 (serine 133) is a Phosphoserine. Histidine 172 serves as the catalytic Proton donor. An interaction with ubiquitin region spans residues 222–227 (ELRFNA).

The protein belongs to the peptidase C12 family. Expressed in various tissues at low level.

Its subcellular location is the cytoplasm. The catalysed reaction is Thiol-dependent hydrolysis of ester, thioester, amide, peptide and isopeptide bonds formed by the C-terminal Gly of ubiquitin (a 76-residue protein attached to proteins as an intracellular targeting signal).. Functionally, ubiquitin-protein hydrolase is involved both in the processing of ubiquitin precursors and of ubiquitinated proteins. This enzyme is a thiol protease that recognizes and hydrolyzes a peptide bond at the C-terminal glycine of ubiquitin. In Mus musculus (Mouse), this protein is Ubiquitin carboxyl-terminal hydrolase isozyme L4 (Uchl4).